Here is a 103-residue protein sequence, read N- to C-terminus: Protein reprimo A (103 aa).

A helical membrane pass occupies residues 50 to 70 (IVQIAVMCVLSLTVVFGIFFL).

It belongs to the reprimo family.

The protein resides in the cytoplasm. It localises to the membrane. Functionally, may be involved in the regulation of p53-dependent G2 arrest of the cell cycle. This chain is Protein reprimo A, found in Danio rerio (Zebrafish).